Reading from the N-terminus, the 326-residue chain is DNA-directed RNA polymerase subunit alpha (326 aa).

Residues 1–230 (MLKIEKQAKA…LHLDPFLEIG (230 aa)) are alpha N-terminal domain (alpha-NTD). The tract at residues 249–326 (DIQVIDDKSH…YDLEKNGSPE (78 aa)) is alpha C-terminal domain (alpha-CTD).

It belongs to the RNA polymerase alpha chain family. Homodimer. The RNAP catalytic core consists of 2 alpha, 1 beta, 1 beta' and 1 omega subunit. When a sigma factor is associated with the core the holoenzyme is formed, which can initiate transcription.

The catalysed reaction is RNA(n) + a ribonucleoside 5'-triphosphate = RNA(n+1) + diphosphate. DNA-dependent RNA polymerase catalyzes the transcription of DNA into RNA using the four ribonucleoside triphosphates as substrates. In Fusobacterium nucleatum subsp. nucleatum (strain ATCC 25586 / DSM 15643 / BCRC 10681 / CIP 101130 / JCM 8532 / KCTC 2640 / LMG 13131 / VPI 4355), this protein is DNA-directed RNA polymerase subunit alpha.